Consider the following 404-residue polypeptide: MSGYEKPSRGWGFCALSPVLLSLLMAAPLGLLGEETRQVSLKVISNRLDFSQNLLHIRAVGTNSTLHYVWSSLGPPAVLLVATNTPNSTLSVNWSLLLSSDPDGGLMVLPEESIQFSSALVFTRLFEFDSTNMSDAASRPLGKSYPPYSLANFSWNNITDSLDPATLSATFRGHPIRDPTGAFTNGSLAFRVQAFSTSGRPAQPPRLLHSADTCQLEVALVGASPRGNRSLFGLEVATLGQGPGCPSMQEQHSIDDEYTPAVFQLDQLLWGSLPSGFMQWRPVAFSQKRGSRDSAMPCQSSPLHPTLAYLLPQSPIVRAFFKTQDHSCAFNLTFGASTGPGYWDQHYLSWSVLLGVGTPPVDALSPLVLGIMAVALGAPALMLLAGGLFLLLGRKRDSEYQSIN.

The signal sequence occupies residues 1–26 (MSGYEKPSRGWGFCALSPVLLSLLMA). The Lumenal portion of the chain corresponds to 27–370 (APLGLLGEET…VDALSPLVLG (344 aa)). Asn-63, Asn-132, Asn-157, Asn-185, and Asn-228 each carry an N-linked (GlcNAc...) asparagine glycan. A helical membrane pass occupies residues 371–391 (IMAVALGAPALMLLAGGLFLL). Over 392-404 (LGRKRDSEYQSIN) the chain is Cytoplasmic. Residues 400–404 (YQSIN) carry the Lysosomal targeting motif motif.

Belongs to the GLMP family. In terms of assembly, interacts (via lumenal domain) with lysosomal protein MFSD1; the interaction starts while both proteins are still in the endoplasmic reticulum and is required for stabilization of MFSD1 in lysosomes but has no direct effect on its targeting to lysosomes or transporter activity. Highly N-glycosylated. N-glycosylation is essential for GLMP stability and for MFSD1 lysosomal localization.

The protein resides in the lysosome membrane. Functionally, required to protect lysosomal transporter MFSD1 from lysosomal proteolysis and for MFSD1 lysosomal localization. The protein is Glycosylated lysosomal membrane protein of Bos taurus (Bovine).